Consider the following 531-residue polypeptide: Putative aldehyde dehydrogenase family 7 member A1 homolog (531 aa).

264–269 (GSSEIG) lines the NAD(+) pocket. The active-site Proton acceptor is glutamate 286. The active-site Nucleophile is cysteine 320.

It belongs to the aldehyde dehydrogenase family. As to quaternary structure, homotetramer.

It carries out the reaction an aldehyde + NAD(+) + H2O = a carboxylate + NADH + 2 H(+). This chain is Putative aldehyde dehydrogenase family 7 member A1 homolog (alh-9), found in Caenorhabditis elegans.